A 97-amino-acid polypeptide reads, in one-letter code: YcgL domain-containing protein PFLU_1517 (97 aa).

Positions 3–87 constitute a YcgL domain; it reads RICSIYRSKK…AEDEYIEHLP (85 aa).

This Pseudomonas fluorescens (strain SBW25) protein is YcgL domain-containing protein PFLU_1517.